The chain runs to 1250 residues: MKAVLTCFRPVVASHRRYCANPGQAMKYLNVAEKNDAAKTIAGLLSNGAAQRREGYSVYNKVFDFEAPVRGQNAKMVMTSVSGHMMQLAFQVSYKNWRTVDPRSLFDAPVKKGVGSDYEPIKRTLEREVRGCQGLIIWTDCDREGENIGYEIIDVCRAIKPNISVYRATFSEITTVAVRRALQQLGQPDKRQSDAVDVRTELDLRTGAAITRFQTMRLQRLFPEKIADKLISYGSCQIPTLGFVAERYKEIEAFVSEPFWKIKVLHTIDDLTVEFNWARNRLFDKEACENYLLLCLAEPDPRALVESVTVKPKHKWRPTPLDTVEMEKLGSRKLKLSAKETMTIAEKLYTKGFISYPRTETNQFSKEFALAPLVEMQTGHRDWGAFAQRVIEWGPNPRNGNKSDQAHPPIHPTKLAENLQGNEARVYELVVRHFLACVSKDAVGSETLVHIDIAGEKFTANGLVIHERNYLDVYVYDKWSAKQIHHYENGQRFEPTEVSLHEGATTAPPLLTEADLIALMEKHGIGTDATHAEHINTIKERGYIGVLDKGFLVPGVIGMGLYEGYDAMELALAKPQLRAEFELDLKLICQGQKDPKVVLTEQIAKYKQAYQQITDKITAMDAKISARINETPAANSAVQEGADGSAPSHGIIQSIFQCPKCNEAPLALKPKKNQQGWYIGCNNFPDCKNAVWLPTECKDASVLDECCPTCGDGYRMLKFRLSTPYYRGVFGTPSGWYKTCLPCDNLFRTTFNINLDSVKKVGGIVGEVRGGGGGPGPGPGGGGSGRGAGSGGWSSGPGGGGSGGGGGSGGWGSGTGGGGSGGWGSGTGGGGLGGGKGKKPGGESKKSATKKPPNEPKPKKTKEPKAAPNKKTSSKSSGSIRSFFTSAAPTNSASNGLDEFFDSNDGFEDAMLAAAESVESSSQPKTISMVPLDDDIAAAFAADDDAEFEALVNGGTMPTESNGDQQLDKSLSEWIKEQDKADERPMLWGTRERASLGTAAPTPPPKPAAKRPRWDSVERDSTPPSSVPESETVLCTGCQQPARQNTVRKNGPNLGRLYYKCPKPDECNFFQWADEPPSSAKSKNSTGSAPQSTTSWGSNRVVTLPSIQQSNSQRGQSSMRSNSSSTVTITQTKTKQQERNTATPGDGEEVMCNCGQLASQLTVRKDGPNQGRPFYACPTREKSCGFFKWGDEDQNQGASSTSWGSANRNPPGRSQPTAITSDGPKTRRCGLCRKEGHTRNKCPRKDEFDM.

One can recognise a Toprim domain in the interval 27 to 171 (KYLNVAEKND…NISVYRATFS (145 aa)). The 422-residue stretch at 189-610 (DKRQSDAVDV…EQIAKYKQAY (422 aa)) folds into the Topo IA-type catalytic domain. The active-site O-(5'-phospho-DNA)-tyrosine intermediate is the Y356. Positions 769-835 (RGGGGGPGPG…GTGGGGLGGG (67 aa)) are enriched in gly residues. 2 disordered regions span residues 769–899 (RGGG…GLDE) and 953–1035 (NGGT…TVLC). Residues 840–865 (PGGESKKSATKKPPNEPKPKKTKEPK) show a composition bias toward basic and acidic residues. A compositionally biased stretch (low complexity) spans 866–886 (AAPNKKTSSKSSGSIRSFFTS). The span at 956–965 (TMPTESNGDQ) shows a compositional bias: polar residues. Composition is skewed to basic and acidic residues over residues 966-994 (QLDK…RERA) and 1012-1021 (PRWDSVERDS). The span at 1022-1033 (TPPSSVPESETV) shows a compositional bias: low complexity. Positions 1035, 1038, 1061, and 1067 each coordinate Zn(2+). The GRF-type 1 zinc finger occupies 1035-1076 (CTGCQQPARQNTVRKNGPNLGRLYYKCPKPDECNFFQWADEP). The interval 1069–1150 (FFQWADEPPS…TATPGDGEEV (82 aa)) is disordered. Positions 1079–1101 (SAKSKNSTGSAPQSTTSWGSNRV) are enriched in polar residues. The segment covering 1106–1134 (SIQQSNSQRGQSSMRSNSSSTVTITQTKT) has biased composition (low complexity). Positions 1152, 1154, 1177, and 1184 each coordinate Zn(2+). The segment at 1152-1193 (CNCGQLASQLTVRKDGPNQGRPFYACPTREKSCGFFKWGDED) adopts a GRF-type 2 zinc-finger fold. The segment at 1188 to 1231 (KWGDEDQNQGASSTSWGSANRNPPGRSQPTAITSDGPKTRRCGL) is disordered. The segment covering 1195 to 1220 (NQGASSTSWGSANRNPPGRSQPTAIT) has biased composition (polar residues).

Belongs to the type IA topoisomerase family.

It catalyses the reaction ATP-independent breakage of single-stranded DNA, followed by passage and rejoining.. In terms of biological role, releases the supercoiling and torsional tension of DNA introduced during the DNA replication and transcription by transiently cleaving and rejoining one strand of the DNA duplex. Introduces a single-strand break via transesterification at a target site in duplex DNA. The scissile phosphodiester is attacked by the catalytic tyrosine of the enzyme, resulting in the formation of a DNA-(5'-phosphotyrosyl)-enzyme intermediate and the expulsion of a 3'-OH DNA strand. The free DNA strand than undergoes passage around the unbroken strand thus removing DNA supercoils. Finally, in the religation step, the DNA 3'-OH attacks the covalent intermediate to expel the active-site tyrosine and restore the DNA phosphodiester backbone. Weakly relaxes negative supercoils and displays a distinct preference for binding single-stranded DNA. This Drosophila melanogaster (Fruit fly) protein is DNA topoisomerase 3-alpha (Top3alpha).